Here is a 188-residue protein sequence, read N- to C-terminus: dITP/XTP pyrophosphatase (188 aa).

7-12 (TGNIGK) contributes to the substrate binding site. Glu36 and Asp65 together coordinate Mg(2+). Catalysis depends on Asp65, which acts as the Proton acceptor. Substrate is bound by residues Ser66, 141 to 144 (FGYD), Lys164, and 169 to 170 (HR).

The protein belongs to the HAM1 NTPase family. Homodimer. It depends on Mg(2+) as a cofactor.

The enzyme catalyses XTP + H2O = XMP + diphosphate + H(+). It catalyses the reaction dITP + H2O = dIMP + diphosphate + H(+). It carries out the reaction ITP + H2O = IMP + diphosphate + H(+). Pyrophosphatase that catalyzes the hydrolysis of nucleoside triphosphates to their monophosphate derivatives, with a high preference for the non-canonical purine nucleotides XTP (xanthosine triphosphate), dITP (deoxyinosine triphosphate) and ITP. Seems to function as a house-cleaning enzyme that removes non-canonical purine nucleotides from the nucleotide pool, thus preventing their incorporation into DNA/RNA and avoiding chromosomal lesions. The protein is dITP/XTP pyrophosphatase of Methanopyrus kandleri (strain AV19 / DSM 6324 / JCM 9639 / NBRC 100938).